The following is a 264-amino-acid chain: uncharacterized protein (264 aa).

2 disordered regions span residues 1 to 52 (MPRS…AVPG) and 123 to 207 (GGRW…PWTR). Residues 29–40 (AAHPTTSPTAAS) show a composition bias toward low complexity. Positions 144-154 (HFQSSGAQQES) are enriched in polar residues. Positions 188-197 (ARKSACKCPR) are enriched in basic residues.

This is an uncharacterized protein from Homo sapiens (Human).